The following is a 471-amino-acid chain: ATP synthase subunit beta (471 aa).

156 to 163 is a binding site for ATP; that stretch reads GGAGVGKT.

The protein belongs to the ATPase alpha/beta chains family. As to quaternary structure, F-type ATPases have 2 components, CF(1) - the catalytic core - and CF(0) - the membrane proton channel. CF(1) has five subunits: alpha(3), beta(3), gamma(1), delta(1), epsilon(1). CF(0) has three main subunits: a(1), b(2) and c(9-12). The alpha and beta chains form an alternating ring which encloses part of the gamma chain. CF(1) is attached to CF(0) by a central stalk formed by the gamma and epsilon chains, while a peripheral stalk is formed by the delta and b chains.

It is found in the cell membrane. It carries out the reaction ATP + H2O + 4 H(+)(in) = ADP + phosphate + 5 H(+)(out). In terms of biological role, produces ATP from ADP in the presence of a proton gradient across the membrane. The catalytic sites are hosted primarily by the beta subunits. This is ATP synthase subunit beta from Lawsonia intracellularis (strain PHE/MN1-00).